The primary structure comprises 300 residues: Cation-efflux pump FieF (300 aa).

The helical transmembrane segment at Leu24 to Val44 threads the bilayer. Zn(2+)-binding residues include Asp45 and Asp49. The next 2 membrane-spanning stretches (helical) occupy residues Ala82–Ile102 and Pro114–Phe134. Zn(2+)-binding residues include His153 and Asp157. 2 helical membrane-spanning segments follow: residues Ser156–His176 and Ala178–Gly198.

This sequence belongs to the cation diffusion facilitator (CDF) transporter (TC 2.A.4) family. FieF subfamily. Homodimer.

The protein localises to the cell inner membrane. The catalysed reaction is Zn(2+)(in) + H(+)(out) = Zn(2+)(out) + H(+)(in). It carries out the reaction Cd(2+)(in) + H(+)(out) = Cd(2+)(out) + H(+)(in). The enzyme catalyses Fe(2+)(in) + H(+)(out) = Fe(2+)(out) + H(+)(in). In terms of biological role, divalent metal cation transporter which exports Zn(2+), Cd(2+) and possibly Fe(2+). May be involved in zinc and iron detoxification by efflux. This Salmonella enteritidis PT4 (strain P125109) protein is Cation-efflux pump FieF.